The sequence spans 264 residues: MAATGEALTPQGYIQHHLTNLSVGEGFWTWHIDSLFFSVGLGVLFLWIFRSVGKKATSGVPGKLQCFVEMIVEFVNNSVKESFHGRNALIAPLALTIFVWVFMMNFMDMIPVDWLPHAASLMGIPYLKAVPTTDVNITFSLAIGVFLLIIFYSIKVKGVSGFVKELTLQPFNHKAMIPVNLLLETVTLIAKPISLALRLFGNLYAGELIFILIALMYGTNLLLSTLGVTLQLGWLIFHILVITLQAFIFMMLTIVYLSMAHEDH.

A run of 6 helical transmembrane segments spans residues 29–49 (TWHI…LWIF), 90–110 (IAPL…MDMI), 134–154 (DVNI…FYSI), 177–197 (IPVN…SLAL), 208–228 (LIFI…TLGV), and 235–255 (LIFH…LTIV).

It belongs to the ATPase A chain family. As to quaternary structure, F-type ATPases have 2 components, CF(1) - the catalytic core - and CF(0) - the membrane proton channel. CF(1) has five subunits: alpha(3), beta(3), gamma(1), delta(1), epsilon(1). CF(0) has three main subunits: a(1), b(2) and c(9-12). The alpha and beta chains form an alternating ring which encloses part of the gamma chain. CF(1) is attached to CF(0) by a central stalk formed by the gamma and epsilon chains, while a peripheral stalk is formed by the delta and b chains.

The protein resides in the cell inner membrane. In terms of biological role, key component of the proton channel; it plays a direct role in the translocation of protons across the membrane. This is ATP synthase subunit a from Shewanella baltica (strain OS223).